The sequence spans 381 residues: MTTSTGKINLLGLTQPEMEQFFDSIGEKRFRAGQVMKWIHHFGVDDFAAMTNVGKALREKLEAVAEIRPPEVVSEDISADGTRKWVIRVASGSCVETVYIPTDDRGTLCVSSQAGCALDCSFCSTGKQGFNSNLTAAEVIGQVWLANKSFGTVPAKIDRAITNVVMMGMGEPLLNFDNVIAAMKIMMDDLGYGISKRRVTLSTSGVVPMIDELAKHIDVSLALSLHAPNDELRNQLVPINKKYPLKMLLESCMGYMATLGGKRVLTVEYTLLKDVNDQPEHAAQMIELLRDVPCKINLIPFNPFPHSGYERPSNNAIRRFQDLLHHGGFNVTTRTTRGDDIDAACGQLVGQVNDRTRRSERYIAVRQLSADAELQDSAVRH.

E96 (proton acceptor) is an active-site residue. The 241-residue stretch at 102–342 (TDDRGTLCVS…TRTTRGDDID (241 aa)) folds into the Radical SAM core domain. An intrachain disulfide couples C109 to C345. Positions 116, 120, and 123 each coordinate [4Fe-4S] cluster. S-adenosyl-L-methionine-binding positions include 170 to 171 (GE), S202, 224 to 226 (SLH), and N302. C345 functions as the S-methylcysteine intermediate in the catalytic mechanism.

This sequence belongs to the radical SAM superfamily. RlmN family. [4Fe-4S] cluster is required as a cofactor.

Its subcellular location is the cytoplasm. It catalyses the reaction adenosine(2503) in 23S rRNA + 2 reduced [2Fe-2S]-[ferredoxin] + 2 S-adenosyl-L-methionine = 2-methyladenosine(2503) in 23S rRNA + 5'-deoxyadenosine + L-methionine + 2 oxidized [2Fe-2S]-[ferredoxin] + S-adenosyl-L-homocysteine. It carries out the reaction adenosine(37) in tRNA + 2 reduced [2Fe-2S]-[ferredoxin] + 2 S-adenosyl-L-methionine = 2-methyladenosine(37) in tRNA + 5'-deoxyadenosine + L-methionine + 2 oxidized [2Fe-2S]-[ferredoxin] + S-adenosyl-L-homocysteine. Specifically methylates position 2 of adenine 2503 in 23S rRNA and position 2 of adenine 37 in tRNAs. m2A2503 modification seems to play a crucial role in the proofreading step occurring at the peptidyl transferase center and thus would serve to optimize ribosomal fidelity. The protein is Dual-specificity RNA methyltransferase RlmN of Pseudomonas putida (strain W619).